The sequence spans 389 residues: Cellobiose 2-epimerase (389 aa).

This sequence belongs to the cellobiose 2-epimerase family. Monomer.

It catalyses the reaction D-cellobiose = beta-D-glucosyl-(1-&gt;4)-D-mannopyranose. In terms of biological role, catalyzes the reversible epimerization of cellobiose to 4-O-beta-D-glucopyranosyl-D-mannose (Glc-Man). Catalyzes epimerization but also isomerization for beta-1,4- and alpha-1,4-gluco-oligosaccharides. Can use cellobiose, lactose, cellotriose, maltose and maltotriose. The polypeptide is Cellobiose 2-epimerase (Dictyoglomus turgidum (strain DSM 6724 / Z-1310)).